A 387-amino-acid chain; its full sequence is Cysteine desulfurase IscS (387 aa).

Pyridoxal 5'-phosphate is bound by residues 73-74, N155, Q183, and 203-205; these read AT and SAH. K206 carries the N6-(pyridoxal phosphate)lysine modification. T241 is a pyridoxal 5'-phosphate binding site. The active-site Cysteine persulfide intermediate is the C328. C328 serves as a coordination point for [2Fe-2S] cluster.

This sequence belongs to the class-V pyridoxal-phosphate-dependent aminotransferase family. NifS/IscS subfamily. Homodimer. Forms a heterotetramer with IscU, interacts with other sulfur acceptors. Requires pyridoxal 5'-phosphate as cofactor.

Its subcellular location is the cytoplasm. It catalyses the reaction (sulfur carrier)-H + L-cysteine = (sulfur carrier)-SH + L-alanine. Its pathway is cofactor biosynthesis; iron-sulfur cluster biosynthesis. Its function is as follows. Master enzyme that delivers sulfur to a number of partners involved in Fe-S cluster assembly, tRNA modification or cofactor biosynthesis. Catalyzes the removal of elemental sulfur atoms from cysteine to produce alanine. Functions as a sulfur delivery protein for Fe-S cluster synthesis onto IscU, an Fe-S scaffold assembly protein, as well as other S acceptor proteins. This Helicobacter pylori (strain ATCC 700392 / 26695) (Campylobacter pylori) protein is Cysteine desulfurase IscS.